The sequence spans 437 residues: MRIASSSGILMDANGKANGSAPSALVAYFLGMGFSREMVFRAIKEIGNDNNNTFPHLLQLLPFLSGDTDSEQILELLLTYQILEEEDEEEDVNWDEDDTVDNFDRATYSDGSGDEDFLQEMSEKDEKIKSLVSMGFPEDEAMRAITRCGLDASVDLLVESIYAPASAGNVYFTNLSDYEDTEFSSFGGRKKTKLIDGTKKKRERYRSRPQWNQVPFDGSHEEPMPLPNPMVGFSLPNDGLRSVHRNLPDHALGPPFFYYENVALAPKGVWTTISRFLYDIYPEFVDSKYFCAAARKRGYIHNLPIENRSPVLPIPPKTISEAFPSTKMWWPSWDPRRQFNCLQTYVASAKHTERIRCALGRFGDALPPAVQKSVLEECRKWNLVWVGKNKVATLEPDEMEFLLGYPRNHTRGVSRKRDIELLGIHSKLIQLHTTSLC.

2 consecutive UBA domains span residues Ser20–Leu60 and Glu120–Pro164. Residues Val243–Cys437 form the SAM-dependent MTase DRM-type domain.

Belongs to the class I-like SAM-binding methyltransferase superfamily. DRM-methyltransferase family.

The protein resides in the nucleus. Involved in de novo DNA methylation. Involved in RNA-directed DNA methylation (RdDM). The sequence is that of Probable inactive DNA (cytosine-5)-methyltransferase DRM1B from Oryza sativa subsp. japonica (Rice).